We begin with the raw amino-acid sequence, 1819 residues long: U3 small nucleolar RNA-associated protein 10 (1819 aa).

An HEAT 1 repeat occupies 583-620 (LDFQAILPFLLVALADPSERIRREAAAALAAIGGIYKK). 2 consecutive transmembrane segments (helical) span residues 945 to 965 (IQSGMSYLLSLTLGSLLAIVN) and 1001 to 1021 (ALLLVSGLSVIAPELVLHSVM). HEAT repeat units follow at residues 1045–1082 (QTIDQVVPALIQSLRNQKRDVVSGTSELLLSFTAAFEH), 1269–1306 (LTLVDFLDTIEVLLQRPSDELRRKVLRLLEGRLRQNPE), 1313–1351 (IRVLDFLPTLVDIVRSSPDILLKHAAVACIDRIAEKYGK), and 1775–1812 (ALLPEMLPYISELMEDEDENVEREVRKWVKQIENVLGE).

It belongs to the HEATR1/UTP10 family. In terms of assembly, component of the ribosomal small subunit (SSU) processome.

The protein localises to the nucleus. It localises to the nucleolus. It is found in the membrane. In terms of biological role, involved in nucleolar processing of pre-18S ribosomal RNA. Involved in ribosome biosynthesis. This chain is U3 small nucleolar RNA-associated protein 10, found in Aspergillus clavatus (strain ATCC 1007 / CBS 513.65 / DSM 816 / NCTC 3887 / NRRL 1 / QM 1276 / 107).